The following is a 580-amino-acid chain: Laccase-20 (580 aa).

A signal peptide spans 1 to 23 (MVASLLCTVAVAVLAVAAVGGEA). Plastocyanin-like domains lie at 31-147 (VVHE…PRDG) and 156-310 (KDVP…YTGV). Residues N36 and N42 are each glycosylated (N-linked (GlcNAc...) asparagine). 2 residues coordinate Cu cation: H81 and H83. N115 carries an N-linked (GlcNAc...) asparagine glycan. Residues H126 and H128 each contribute to the Cu cation site. N200, N339, N373, N392, N399, N429, and N460 each carry an N-linked (GlcNAc...) asparagine glycan. The region spanning 419–561 (DFPVRPPRPY…ATAFIVEDGP (143 aa)) is the Plastocyanin-like 3 domain. The Cu cation site is built by N478, H481, H483, H540, C541, H542, H546, and M551. The tract at residues 560–580 (GPTPETSLPPPPPEFKRCDAS) is disordered.

Belongs to the multicopper oxidase family. Requires Cu cation as cofactor.

Its subcellular location is the secreted. The protein resides in the extracellular space. It localises to the apoplast. It catalyses the reaction 4 hydroquinone + O2 = 4 benzosemiquinone + 2 H2O. In terms of biological role, lignin degradation and detoxification of lignin-derived products. The polypeptide is Laccase-20 (LAC20) (Oryza sativa subsp. japonica (Rice)).